The following is a 512-amino-acid chain: MSKKPVMLMILDGFGISPNKEGNAVAAANKPNYDRLFAKYPHTELQASGLEVGLPEGQMGNSEVGHLNIGAGRIIYQELTRITKEIKEGTFFTNKALVKAMDEAKENNTSLHLMGLLSNGGVHSHIDHLKGLLELAKKKGLQKVYVHAFMDGRDVAPSSGKEFIVELENAMKEIGVGEIATISGRYYAMDRDNRWERVELAYNAMVLGEGEKASSAVEAIEKSYHDNKTDEFVLPTVIEEDGHPVARIKDGDSVIFFNFRPDRAREITRAIVDPEFKGFERKQLHVNFVCMTQYDKTLECVDVAYRPESYTNTLGEYVASKGLNQLRIAETEKYAHVTFFFNGGVEQPNTNEDRALIASPKVATYDLKPEMSAYEVTDELINRLDQDKYDMIILNFANPDMVGHTGVQEAAVKAIEAVDECLGKVADKVLEKEGTLFITADHGNAEVMIDYSTGKPMTAHTSDPVPFLWVSKDAEGKSLKDGGKLADIAPTMLTVMGLEVPSEMTGTCLLNK.

Residues Asp-12 and Ser-62 each contribute to the Mn(2+) site. Catalysis depends on Ser-62, which acts as the Phosphoserine intermediate. Substrate contacts are provided by residues His-123, 153 to 154 (RD), Arg-185, Arg-191, 260 to 263 (RPDR), and Lys-333. Asp-400, His-404, Asp-441, His-442, and His-460 together coordinate Mn(2+).

Belongs to the BPG-independent phosphoglycerate mutase family. In terms of assembly, monomer. Mn(2+) is required as a cofactor.

The catalysed reaction is (2R)-2-phosphoglycerate = (2R)-3-phosphoglycerate. It participates in carbohydrate degradation; glycolysis; pyruvate from D-glyceraldehyde 3-phosphate: step 3/5. Its function is as follows. Catalyzes the interconversion of 2-phosphoglycerate and 3-phosphoglycerate. The polypeptide is 2,3-bisphosphoglycerate-independent phosphoglycerate mutase (Clostridium perfringens (strain ATCC 13124 / DSM 756 / JCM 1290 / NCIMB 6125 / NCTC 8237 / Type A)).